The chain runs to 880 residues: Kinesin heavy chain (880 aa).

The Kinesin motor domain maps to 4-327 (SIKVVCRFRP…LRFGMRAKAI (324 aa)). Residues 85–92 (GQTGAGKS) and 235–242 (GSEKVGKT) each bind ATP. A disordered region spans residues 388-426 (VSGAKAAAAQTPRPSTPSRLATESRAETPVAERSATPGI). A compositionally biased stretch (polar residues) spans 399 to 408 (PRPSTPSRLA). Residues 428–849 (IDKDEREEFL…QEKLTTASHR (422 aa)) adopt a coiled-coil conformation.

The protein belongs to the TRAFAC class myosin-kinesin ATPase superfamily. Kinesin family. Kinesin subfamily.

The protein localises to the cytoplasm. Its subcellular location is the cytoskeleton. Kinesin is a microtubule-associated force-producing protein that may play a role in organelle transport. Its motor activity is directed toward the microtubule's plus end. The chain is Kinesin heavy chain (klp1) from Botryotinia fuckeliana (Noble rot fungus).